Here is a 938-residue protein sequence, read N- to C-terminus: Cyclin-dependent kinase-like 5 (938 aa).

A Protein kinase domain is found at 13 to 297 (FEILGVVGEG…TEQCLNHPTF (285 aa)). ATP is bound by residues 19-27 (VGEGAYGVV) and K42. D135 serves as the catalytic Proton acceptor. Disordered regions lie at residues 298–348 (QTQR…DIQN), 382–566 (KTYQ…RHSK), 646–865 (SPQP…LTAQ), and 877–938 (HPLS…KWKQ). Polar residues-rich tracts occupy residues 319–331 (ESSTLSNRNQSTK) and 382–402 (KTYQASTQPGSSSKDLTNNNI). The residue at position 407 (S407) is a Phosphoserine. Residues 407–417 (SPKEAKSKTEF) show a composition bias toward basic and acidic residues. Polar residues-rich tracts occupy residues 434-462 (LKSSTRSQQNRHSFMESSQSKAGTLQPSE), 473-482 (IPQSSRSPSY), and 494-548 (DSKS…SGRN). S479 carries the phosphoserine modification. 2 stretches are compositionally biased toward basic and acidic residues: residues 549–559 (NRNEGTLDSRR) and 679–704 (QKSEGGVYHDPHSDDGTAPKENRHLY). The residue at position 720 (S720) is a Phosphoserine. Positions 728-748 (HENNVSTRVSSLPSDSSSGTN) are enriched in polar residues. A Phosphoserine modification is found at S761. Basic and acidic residues-rich tracts occupy residues 769-778 (DQLKEKEKQG) and 817-827 (RPKEWRPEKLS). Residues 880 to 891 (SQATGGSSNIRQ) show a composition bias toward polar residues.

It belongs to the protein kinase superfamily. CMGC Ser/Thr protein kinase family. CDC2/CDKX subfamily. Interacts with MECP2. Autophosphorylated.

It localises to the nucleus. The protein localises to the cytoplasm. Its subcellular location is the cytoskeleton. It is found in the cilium basal body. The protein resides in the microtubule organizing center. It localises to the centrosome. The catalysed reaction is L-seryl-[protein] + ATP = O-phospho-L-seryl-[protein] + ADP + H(+). It catalyses the reaction L-threonyl-[protein] + ATP = O-phospho-L-threonyl-[protein] + ADP + H(+). Its function is as follows. Mediates phosphorylation of MECP2. May regulate ciliogenesis. In Mus musculus (Mouse), this protein is Cyclin-dependent kinase-like 5.